The sequence spans 188 residues: Marginal zone B- and B1-cell-specific protein (188 aa).

The signal sequence occupies residues 1–20 (MRLPLPLLLLFGCRAILGSA). 3 disulfide bridges follow: C49–C177, C52–C170, and C94–C142. The short motif at 185 to 188 (REEL) is the Prevents secretion from ER element.

This sequence belongs to the MZB1 family. Part of the ER chaperone complex, a multi-protein complex in the endoplasmic reticulum containing a large number of molecular chaperones which associates with unassembled incompletely folded immunoglobulin heavy chains. Interacts with HSP90B1 and PDIA3 in a calcium-dependent manner. In terms of processing, forms an interchain disulfide bond with IgM monomers. Expressed predominantly in the spleen and lymph nodes. Abundantly expressed in marginal zone B and B1 cells. High expression in mesenteric adipose tissue (MAT). Expressed also in pancreas, perigonadal adipose tissue (PAT), uterus, subcutaneous adipose tissue, heart, muscle, ovary and liver. Very low expression is detected in brown adipose tissue. In PAT, significantly higher expression in stromal-vascular cell than in adipocytes. Expressed in macrophage RAW 264.7 cell line. Down-regulated in For-knockout female MAT at 5 months (obese state) followed by steep up-regulation at 9 months (prediabetic condition) when mutants progress towards the metabolic syndrome.

Its subcellular location is the endoplasmic reticulum. The protein resides in the endoplasmic reticulum lumen. It is found in the secreted. Associates with immunoglobulin M (IgM) heavy and light chains and promotes IgM assembly and secretion. May exert its effect by acting as a molecular chaperone or as an oxidoreductase as it displays a low level of oxidoreductase activity. Helps to diversify peripheral B-cell functions by regulating Ca(2+) stores, antibody secretion and integrin activation. Functionally, acts as a hormone-regulated adipokine/pro-inflammatory cytokine that is implicated in causing chronic inflammation, affecting cellular expansion and blunting insulin response in adipocytes. May have a role in the onset of insulin resistance. The protein is Marginal zone B- and B1-cell-specific protein (Mzb1) of Mus musculus (Mouse).